A 239-amino-acid polypeptide reads, in one-letter code: MSMLCYTLIIAFLIGIWAAPKSEDNVPLGSPATSDLSDTSCAQTHEGLKTSRNTDQRHPAPKKADDQELGSVANIIVDPKLFQKRQFQSPRVLFSTQPPPLSRDEQSVEFLDNEDALNRNIQAKRQNHPVHDLGEQSVCDSISEWVTKTTATDIKGNTVTVKVDVNLNNQVYKQYFFETKCRNPNPVPSGCRGIDSSHWNSYCTTTQTFVRALTMEGNQASWRFIRIDTACVCVISKKT.

The first 18 residues, 1-18, serve as a signal peptide directing secretion; the sequence is MSMLCYTLIIAFLIGIWA. Positions 19–125 are excised as a propeptide; sequence APKSEDNVPL…ALNRNIQAKR (107 aa). The segment covering 47 to 66 has biased composition (basic and acidic residues); it reads GLKTSRNTDQRHPAPKKADD. The disordered stretch occupies residues 47–68; sequence GLKTSRNTDQRHPAPKKADDQE. 3 disulfides stabilise this stretch: cysteine 139/cysteine 203, cysteine 181/cysteine 231, and cysteine 191/cysteine 233.

It belongs to the NGF-beta family. In terms of assembly, homodimer; non-covalently linked. In terms of tissue distribution, expressed by the venom gland.

It is found in the secreted. Its function is as follows. Nerve growth factor is important for the development and maintenance of the sympathetic and sensory nervous systems. It stimulates division and differentiation of sympathetic and embryonic sensory neurons as well as basal forebrain cholinergic neurons in the brain. Its relevance in the snake venom is not clear. However, it has been shown to inhibit metalloproteinase-dependent proteolysis of platelet glycoprotein Ib alpha, suggesting a metalloproteinase inhibition to prevent metalloprotease autodigestion and/or protection against prey proteases. Binds a lipid between the two protein chains in the homodimer. The lipid-bound form promotes histamine relase from mouse mast cells, contrary to the lipid-free form. The polypeptide is Venom nerve growth factor (Pseudechis porphyriacus (Red-bellied black snake)).